The sequence spans 316 residues: tRNA dimethylallyltransferase (316 aa).

17–24 (GPTASGKT) provides a ligand contact to ATP. 19-24 (TASGKT) lines the substrate pocket. Interaction with substrate tRNA stretches follow at residues 42 to 45 (DSAL), 166 to 170 (QRLSR), 247 to 252 (RCVGYR), and 280 to 287 (KRQITWLR).

It belongs to the IPP transferase family. In terms of assembly, monomer. Mg(2+) is required as a cofactor.

The catalysed reaction is adenosine(37) in tRNA + dimethylallyl diphosphate = N(6)-dimethylallyladenosine(37) in tRNA + diphosphate. Functionally, catalyzes the transfer of a dimethylallyl group onto the adenine at position 37 in tRNAs that read codons beginning with uridine, leading to the formation of N6-(dimethylallyl)adenosine (i(6)A). The chain is tRNA dimethylallyltransferase from Shigella boydii serotype 18 (strain CDC 3083-94 / BS512).